The primary structure comprises 242 residues: Biosynthetic peptidoglycan transglycosylase (242 aa).

The chain crosses the membrane as a helical span at residues 19-39; sequence LMVVLAVFWGGGIALFSVAPV.

It belongs to the glycosyltransferase 51 family.

Its subcellular location is the cell inner membrane. The catalysed reaction is [GlcNAc-(1-&gt;4)-Mur2Ac(oyl-L-Ala-gamma-D-Glu-L-Lys-D-Ala-D-Ala)](n)-di-trans,octa-cis-undecaprenyl diphosphate + beta-D-GlcNAc-(1-&gt;4)-Mur2Ac(oyl-L-Ala-gamma-D-Glu-L-Lys-D-Ala-D-Ala)-di-trans,octa-cis-undecaprenyl diphosphate = [GlcNAc-(1-&gt;4)-Mur2Ac(oyl-L-Ala-gamma-D-Glu-L-Lys-D-Ala-D-Ala)](n+1)-di-trans,octa-cis-undecaprenyl diphosphate + di-trans,octa-cis-undecaprenyl diphosphate + H(+). Its pathway is cell wall biogenesis; peptidoglycan biosynthesis. Its function is as follows. Peptidoglycan polymerase that catalyzes glycan chain elongation from lipid-linked precursors. This chain is Biosynthetic peptidoglycan transglycosylase, found in Escherichia coli (strain SMS-3-5 / SECEC).